The sequence spans 102 residues: Large ribosomal subunit protein bL21 (102 aa).

Over residues 80–91 (KNSKRKKGHRQP) the composition is skewed to basic residues. The interval 80–102 (KNSKRKKGHRQPYTKLTIDKINA) is disordered.

This sequence belongs to the bacterial ribosomal protein bL21 family. In terms of assembly, part of the 50S ribosomal subunit. Contacts protein L20.

Its function is as follows. This protein binds to 23S rRNA in the presence of protein L20. The protein is Large ribosomal subunit protein bL21 of Staphylococcus aureus (strain Mu3 / ATCC 700698).